We begin with the raw amino-acid sequence, 138 residues long: Large ribosomal subunit protein bL19 (138 aa).

It belongs to the bacterial ribosomal protein bL19 family.

In terms of biological role, this protein is located at the 30S-50S ribosomal subunit interface and may play a role in the structure and function of the aminoacyl-tRNA binding site. The polypeptide is Large ribosomal subunit protein bL19 (Rickettsia africae (strain ESF-5)).